The primary structure comprises 400 residues: WW domain-containing transcription regulator protein 1 (400 aa).

Lys46 is covalently cross-linked (Glycyl lysine isopeptide (Lys-Gly) (interchain with G-Cter in ubiquitin)). The interval Phe52–Ser117 is disordered. The span at His61–Ser70 shows a compositional bias: polar residues. Ser62 and Ser89 each carry phosphoserine. Over residues Pro91–His110 the composition is skewed to low complexity. Residues Leu124–Lys157 enclose the WW domain. Residues Asn192–Thr211 are compositionally biased toward polar residues. Positions Asn192–Ala216 are disordered. Residues Pro222–Leu400 are required for interaction with PALS1. Phosphoserine occurs at positions 295 and 311. A PDZ-binding motif is present at residues Glu394–Leu400.

In terms of assembly, binds to SLC9A3R2 via the PDZ motif at the plasma membrane. Binds to YWHAZ in vivo and in vitro through the phosphoserine-binding motif RSHSSP. Interacts (via coiled-coil domain) with SMAD2 (via MH1 domain), SMAD3 and SMAD4. Interacts with MED15. Interacts with PAX8 and NKX2-1. Interacts with TEAD1, TEAD2, TEAD3 and TEAD4. Interacts (via WW domain) with PALS1. Interacts with LATS1. Interacts with YAP1 (when phosphorylated at 'Ser-112'). Interacts (via WW domain) with PRRG4 (via cytoplasmic domain). Interacts (via WW domain) with AMOTL2 (via PPXY motif); the interaction promotes WWTR1/TAZ localization to the cytoplasm and tight junctions, thereby inhibiting its transcriptional coactivator properties. Interacts (via WW domain) with AMOT; the interaction facilitates translocation of WWTR1/TAZ to the cytoplasm. Phosphorylated by LATS2 and STK3/MST2. Phosphorylation by LATS2 results in creation of 14-3-3 binding sites, retention in the cytoplasm, and functional inactivation. Phosphorylation results in the inhibition of transcriptional coactivation through YWHAZ-mediated nuclear export. Post-translationally, ubiquitinated at Lys-46; leading to proteasomal degradation. Deubiquitinated and stabilized by UCHL1 at Lys-46; leading to inhibition of osteoclastogenesis.

The protein resides in the cytoplasm. The protein localises to the nucleus. It localises to the cell membrane. Its subcellular location is the cell junction. It is found in the tight junction. Its function is as follows. Transcriptional coactivator which acts as a downstream regulatory target in the Hippo signaling pathway that plays a pivotal role in organ size control and tumor suppression by restricting proliferation and promoting apoptosis. The core of this pathway is composed of a kinase cascade wherein STK3/MST2 and STK4/MST1, in complex with its regulatory protein SAV1, phosphorylates and activates LATS1/2 in complex with its regulatory protein MOB1, which in turn phosphorylates and inactivates YAP1 oncoprotein and WWTR1/TAZ. WWTR1 enhances PAX8 and NKX2-1/TTF1-dependent gene activation. In conjunction with YAP1, involved in the regulation of TGFB1-dependent SMAD2 and SMAD3 nuclear accumulation. Plays a key role in coupling SMADs to the transcriptional machinery such as the mediator complex. Regulates embryonic stem-cell self-renewal, promotes cell proliferation and epithelial-mesenchymal transition. The sequence is that of WW domain-containing transcription regulator protein 1 from Canis lupus familiaris (Dog).